Consider the following 436-residue polypeptide: Proline transporter 3 (436 aa).

The next 11 membrane-spanning stretches (helical) occupy residues 29 to 49 (SWFQ…VLGY), 52 to 72 (TVMV…ATAI), 118 to 138 (LFMI…AVYV), 151 to 171 (FIAI…HLSA), 172 to 192 (LGIW…VAIV), 216 to 236 (LFTI…GMLP), 254 to 274 (LYFQ…IGYW), 296 to 316 (ALAN…FASP), 345 to 365 (GGYI…GDFM), 366 to 386 (SLTG…HMYY), and 405 to 425 (VVFF…LIAL).

Belongs to the amino acid/polyamine transporter 2 family. Amino acid/auxin permease (AAAP) (TC 2.A.18.3) subfamily. As to expression, expressed in epidermal cells of leaves, sepals and petals.

It is found in the cell membrane. Its function is as follows. Proline transporter that mediates proline and glycine betaine transport. When expressed in a heterologous system (yeast), imports L-proline, glycine betaine and GABA across the plasma membrane. The chain is Proline transporter 3 (PROT3) from Arabidopsis thaliana (Mouse-ear cress).